Reading from the N-terminus, the 106-residue chain is Nucleoid-associated protein Fjoh_2555 (106 aa).

Belongs to the YbaB/EbfC family. Homodimer.

It is found in the cytoplasm. The protein resides in the nucleoid. Binds to DNA and alters its conformation. May be involved in regulation of gene expression, nucleoid organization and DNA protection. The chain is Nucleoid-associated protein Fjoh_2555 from Flavobacterium johnsoniae (strain ATCC 17061 / DSM 2064 / JCM 8514 / BCRC 14874 / CCUG 350202 / NBRC 14942 / NCIMB 11054 / UW101) (Cytophaga johnsonae).